The sequence spans 191 residues: Large ribosomal subunit protein bL9c (191 aa).

The transit peptide at M1–A35 directs the protein to the chloroplast.

This sequence belongs to the bacterial ribosomal protein bL9 family. In terms of assembly, part of the 50S ribosomal subunit.

The protein localises to the plastid. The protein resides in the chloroplast. Functionally, binds to the 23S rRNA. The sequence is that of Large ribosomal subunit protein bL9c (RPL9) from Triticum aestivum (Wheat).